We begin with the raw amino-acid sequence, 342 residues long: S-adenosylmethionine:tRNA ribosyltransferase-isomerase (342 aa).

This sequence belongs to the QueA family. In terms of assembly, monomer.

The protein resides in the cytoplasm. It catalyses the reaction 7-aminomethyl-7-carbaguanosine(34) in tRNA + S-adenosyl-L-methionine = epoxyqueuosine(34) in tRNA + adenine + L-methionine + 2 H(+). It functions in the pathway tRNA modification; tRNA-queuosine biosynthesis. In terms of biological role, transfers and isomerizes the ribose moiety from AdoMet to the 7-aminomethyl group of 7-deazaguanine (preQ1-tRNA) to give epoxyqueuosine (oQ-tRNA). The polypeptide is S-adenosylmethionine:tRNA ribosyltransferase-isomerase (Campylobacter jejuni subsp. jejuni serotype O:23/36 (strain 81-176)).